The sequence spans 478 residues: Geranial dehydrogenase (478 aa).

Position 230–235 (230–235 (GSTSAG)) interacts with NAD(+). Residue E252 is the Proton acceptor of the active site. C286 functions as the Nucleophile in the catalytic mechanism.

This sequence belongs to the aldehyde dehydrogenase family.

It catalyses the reaction (2E)-geranial + NAD(+) + H2O = geranate + NADH + 2 H(+). The catalysed reaction is perillyl aldehyde + NAD(+) + H2O = perillate + NADH + 2 H(+). Its pathway is terpene metabolism; monoterpene degradation. Functionally, involved in the degradation of the monoterpenes beta-myrcene and limonene. During anaerobic degradation of beta-myrcene, catalyzes the NAD(+)-dependent oxidation of geranial to geranic acid. Seems to be specific for the trans-isomer geranial, since it does not act on the cis-isomer neral. During degradation of limonene, catalyzes the NAD(+)-dependent conversion of perillyl aldehyde to perrilic acid. The protein is Geranial dehydrogenase of Castellaniella defragrans (strain DSM 12143 / CCUG 39792 / 65Phen) (Alcaligenes defragrans).